A 360-amino-acid polypeptide reads, in one-letter code: MSKFLPEELAIEILVRLSMKDLARFRCVCKTWRDLINDPGFTETYRDMSPAKFVSFYDKNFYMLDVEGKHPVITNKLDFPLDQSMIDESTCVLHCDGTLCVTLKNHTLMVWNPFSKQFKIVPNPGIYQDSNILGFGYDPVHDDYKVVTFIDRLDVSTAHVFEFRTGSWGESLRISYPDWHYRDRRGTFLDQYLYWIAYRSSADRFILCFNLSTHEYRKLPLPVYNQGVTSSWLGVTSQKLCITEYEMCKKEIRISVMEKTGSWSKIISLSMSSFISVQDRIYDYQVEFVSFTRKNDLVVTFTGYNDHFEMEPEERTKKKMFLYKTGNERSEEVRFCNPLAGLRFLCECVETLKIVNRIFI.

Residues 1–48 (MSKFLPEELAIEILVRLSMKDLARFRCVCKTWRDLINDPGFTETYRDM) enclose the F-box domain.

The protein is Putative F-box protein At3g16210 of Arabidopsis thaliana (Mouse-ear cress).